Reading from the N-terminus, the 128-residue chain is Large ribosomal subunit protein uL22 (128 aa).

The protein belongs to the universal ribosomal protein uL22 family. In terms of assembly, part of the 50S ribosomal subunit.

Its function is as follows. This protein binds specifically to 23S rRNA; its binding is stimulated by other ribosomal proteins, e.g. L4, L17, and L20. It is important during the early stages of 50S assembly. It makes multiple contacts with different domains of the 23S rRNA in the assembled 50S subunit and ribosome. Functionally, the globular domain of the protein is located near the polypeptide exit tunnel on the outside of the subunit, while an extended beta-hairpin is found that lines the wall of the exit tunnel in the center of the 70S ribosome. The sequence is that of Large ribosomal subunit protein uL22 from Nitrobacter winogradskyi (strain ATCC 25391 / DSM 10237 / CIP 104748 / NCIMB 11846 / Nb-255).